Reading from the N-terminus, the 634-residue chain is Bacteriophytochrome (634 aa).

A biliverdin IXalpha-binding site is contributed by Cys13. The PAS 1 domain occupies 13-118 (CAREPIHIPG…YPQQWLVEME (106 aa)). The segment at 13 to 514 (CAREPIHIPG…ELMERKRFQQ (502 aa)) is photosensory core domain. A GAF domain is found at 151 to 305 (RVAKGLRSLI…VTDAVARTLA (155 aa)). The tract at residues 325–508 (TVREKLITDF…SLRVLIELME (184 aa)) is phytochrome-specific (PHY). Positions 452–480 (WAGNPQLAKLEDIPNSRLSPRKSFDLWQQ) are tongue domain. Positions 515-590 (DFTLLEASLS…ELLQDALRNG (76 aa)) constitute a PAS 2 domain. Positions 515 to 634 (DFTLLEASLS…HWLLQLRDPE (120 aa)) are PAS9, output module, not required to bind biliverdin IX-alpha, required for dimerization.

The protein in the N-terminal section; belongs to the phytochrome family. As to quaternary structure, forms head-to-head homodimers. Post-translationally, contains one covalently linked biliverdin IX-alpha chromophore; present in the crystal structure as a mixture of Pr and Meta-R configurations.

Its function is as follows. Photoreceptor which exists in two forms that are reversibly interconvertible by light: far-red light (733 nm) converts protein to the red-absorbing (Pr) form, while red light (630 nm) partly converts the protein to the far-red-absorbing (Pfr) form. Regulates virulence of X.campestris pv. campestris on its host plants, perhaps by fine-tuning expression to ambient light levels and/or spatial cues. The Pr form may sense light and partially inhibit virulence; in the dark (Pfr form) biofilm and xanathan production rise and bacteria are more virulent. Strains overexpressing this protein have significantly decreased amounts of extracellular beta-1,4-endoglucanase, produce less xanthin and have decreased transcription of genes involved in virulence such as endoglucanases, type 2 secretion systems, xanthan production and flagellar-dependent motility. This Xanthomonas campestris pv. campestris (strain 8004) protein is Bacteriophytochrome (bphP).